A 349-amino-acid chain; its full sequence is tRNA pseudouridine synthase D (349 aa).

Phe27 is a binding site for substrate. The active-site Nucleophile is the Asp80. Asn129 lines the substrate pocket. Residues 155–303 (GVPNYFGAQR…VEAARRAMLL (149 aa)) enclose the TRUD domain. Phe329 is a binding site for substrate.

It belongs to the pseudouridine synthase TruD family.

The catalysed reaction is uridine(13) in tRNA = pseudouridine(13) in tRNA. Responsible for synthesis of pseudouridine from uracil-13 in transfer RNAs. This Escherichia coli O17:K52:H18 (strain UMN026 / ExPEC) protein is tRNA pseudouridine synthase D.